The chain runs to 237 residues: Large ribosomal subunit protein uL1 (237 aa).

Belongs to the universal ribosomal protein uL1 family. In terms of assembly, part of the 50S ribosomal subunit.

Its function is as follows. Binds directly to 23S rRNA. The L1 stalk is quite mobile in the ribosome, and is involved in E site tRNA release. Functionally, protein L1 is also a translational repressor protein, it controls the translation of the L11 operon by binding to its mRNA. The chain is Large ribosomal subunit protein uL1 from Synechococcus elongatus (strain ATCC 33912 / PCC 7942 / FACHB-805) (Anacystis nidulans R2).